A 562-amino-acid polypeptide reads, in one-letter code: Arginine--tRNA ligase (562 aa).

The 'HIGH' region signature appears at 129–139 (ANPTGPLHVGH).

This sequence belongs to the class-I aminoacyl-tRNA synthetase family. In terms of assembly, monomer.

The protein resides in the cytoplasm. It catalyses the reaction tRNA(Arg) + L-arginine + ATP = L-arginyl-tRNA(Arg) + AMP + diphosphate. This chain is Arginine--tRNA ligase, found in Xylella fastidiosa (strain M12).